Consider the following 509-residue polypeptide: Phosphoenolpyruvate carboxylase (509 aa).

This sequence belongs to the PEPCase type 2 family. As to quaternary structure, homotetramer. Requires Mg(2+) as cofactor.

It catalyses the reaction oxaloacetate + phosphate = phosphoenolpyruvate + hydrogencarbonate. Its function is as follows. Catalyzes the irreversible beta-carboxylation of phosphoenolpyruvate (PEP) to form oxaloacetate (OAA), a four-carbon dicarboxylic acid source for the tricarboxylic acid cycle. This chain is Phosphoenolpyruvate carboxylase, found in Metallosphaera sedula (strain ATCC 51363 / DSM 5348 / JCM 9185 / NBRC 15509 / TH2).